Consider the following 95-residue polypeptide: MQVLVRDNNVDQALKALKKKMQREGIFREMKLRGHYEKPSEKKAREKAEAVRRARKLARKKMQREGLLPMKPKPVFGAGPGAGRGGPAAGPRGPR.

Positions 56–95 (KLARKKMQREGLLPMKPKPVFGAGPGAGRGGPAAGPRGPR) are disordered. A compositionally biased stretch (gly residues) spans 78–88 (AGPGAGRGGPA).

This sequence belongs to the bacterial ribosomal protein bS21 family.

The protein is Small ribosomal subunit protein bS21 of Nitrobacter winogradskyi (strain ATCC 25391 / DSM 10237 / CIP 104748 / NCIMB 11846 / Nb-255).